The chain runs to 172 residues: RNA silencing suppressor p19 (172 aa).

Residues Met-1–Tyr-15 show a composition bias toward basic and acidic residues. The segment at Met-1–Pro-37 is disordered.

This sequence belongs to the tombusvirus protein p19 family. As to quaternary structure, homodimer.

Viral suppressor of RNA silencing which binds specifically to silencing RNAs (siRNAs). Acts as a molecular caliper to specifically select siRNAs based on the length of the duplex region of the RNA. This chain is RNA silencing suppressor p19, found in Capsicum annuum (Capsicum pepper).